The following is a 167-amino-acid chain: Ureidoglycolate lyase (167 aa).

It belongs to the ureidoglycolate lyase family. As to quaternary structure, homodimer. Ni(2+) is required as a cofactor.

The catalysed reaction is (S)-ureidoglycolate = urea + glyoxylate. It functions in the pathway nitrogen metabolism; (S)-allantoin degradation. Catalyzes the catabolism of the allantoin degradation intermediate (S)-ureidoglycolate, generating urea and glyoxylate. Involved in the utilization of allantoin as nitrogen source. This chain is Ureidoglycolate lyase, found in Pseudomonas fluorescens (strain Pf0-1).